Reading from the N-terminus, the 31-residue chain is MLTITSYFGFLLAALTITSALLIGLNKIRLI.

Residues 4–26 (ITSYFGFLLAALTITSALLIGLN) traverse the membrane as a helical segment.

This sequence belongs to the PetL family. As to quaternary structure, the 4 large subunits of the cytochrome b6-f complex are cytochrome b6, subunit IV (17 kDa polypeptide, PetD), cytochrome f and the Rieske protein, while the 4 small subunits are PetG, PetL, PetM and PetN. The complex functions as a dimer.

It localises to the plastid. The protein resides in the chloroplast thylakoid membrane. Component of the cytochrome b6-f complex, which mediates electron transfer between photosystem II (PSII) and photosystem I (PSI), cyclic electron flow around PSI, and state transitions. PetL is important for photoautotrophic growth as well as for electron transfer efficiency and stability of the cytochrome b6-f complex. The polypeptide is Cytochrome b6-f complex subunit 6 (Amborella trichopoda).